The chain runs to 459 residues: MLKIYNTLKREKEEFKPIHPDHVGMYVCGVTVYDLCHFGHGRTFVSFDVIARYLRYLGYNLRYVRNITDVDDKIIKRSLENNETCDQLVDRMIIEMHKDFDALNILRPDVEPRATQHIPEIIAIVEKLLAKGHAYVAEDGDVMFNVESFQKYGALSRQNLEQLQAGARVEIKSVKRNPMDFVLWKMSKENEPSWDSPWGKGRPGWHIECSAMNSKELGNHFDIHGGGSDLMFPHHENEIAQSCCAHGDDYVNYWLHTGMLTINEEKMSKSLNNFFTIRDILNKYDCESVRYFFLTAQYRSLLDYSEENIGLARKALERLYTALRGCDWNVELVENDQYVTAFKESMDDDFNTPGALAVLFELAREVNKLKAENQAEANKLAARLKQLAGVLGLLEQDPETFLQGDANNDEVAEIEAFIKQRNEARASKNWAVADEARNKLTAMGIVLEDGANGTTWRRA.

Cysteine 28 provides a ligand contact to Zn(2+). The short motif at 30-40 is the 'HIGH' region element; that stretch reads VTVYDLCHFGH. Zn(2+)-binding residues include cysteine 209, histidine 234, and glutamate 238. The 'KMSKS' region signature appears at 266 to 270; sequence KMSKS. Lysine 269 contacts ATP.

The protein belongs to the class-I aminoacyl-tRNA synthetase family. In terms of assembly, monomer. Requires Zn(2+) as cofactor.

Its subcellular location is the cytoplasm. The enzyme catalyses tRNA(Cys) + L-cysteine + ATP = L-cysteinyl-tRNA(Cys) + AMP + diphosphate. This is Cysteine--tRNA ligase from Glaesserella parasuis serovar 5 (strain SH0165) (Haemophilus parasuis).